The primary structure comprises 264 residues: Small ribosomal subunit protein eS1 (264 aa).

The interval His232–Val264 is disordered. Basic and acidic residues predominate over residues Ser242–Gly255.

The protein belongs to the eukaryotic ribosomal protein eS1 family. As to quaternary structure, component of the small ribosomal subunit. Mature ribosomes consist of a small (40S) and a large (60S) subunit. The 40S subunit contains about 33 different proteins and 1 molecule of RNA (18S). The 60S subunit contains about 49 different proteins and 3 molecules of RNA (28S, 5.8S and 5S). Part of the small subunit (SSU) processome, composed of more than 70 proteins and the RNA chaperone small nucleolar RNA (snoRNA) U3.

The protein localises to the cytoplasm. It is found in the nucleus. The protein resides in the nucleolus. Functionally, component of the small ribosomal subunit. The ribosome is a large ribonucleoprotein complex responsible for the synthesis of proteins in the cell. Part of the small subunit (SSU) processome, first precursor of the small eukaryotic ribosomal subunit. During the assembly of the SSU processome in the nucleolus, many ribosome biogenesis factors, an RNA chaperone and ribosomal proteins associate with the nascent pre-rRNA and work in concert to generate RNA folding, modifications, rearrangements and cleavage as well as targeted degradation of pre-ribosomal RNA by the RNA exosome. May play a role during erythropoiesis. In Taeniopygia guttata (Zebra finch), this protein is Small ribosomal subunit protein eS1.